Here is a 258-residue protein sequence, read N- to C-terminus: Dihydroorotate dehydrogenase B (NAD(+)), electron transfer subunit (258 aa).

An FAD-binding FR-type domain is found at 2-100; it reads ILKENLTVVS…LGPQGNGFDL (99 aa). Residues 51–54, 68–70, and 75–76 contribute to the FAD site; these read RPIS, IYR, and GT. Positions 220, 225, 228, and 244 each coordinate [2Fe-2S] cluster.

Belongs to the PyrK family. Heterotetramer of 2 PyrK and 2 PyrD type B subunits. [2Fe-2S] cluster serves as cofactor. FAD is required as a cofactor.

It participates in pyrimidine metabolism; UMP biosynthesis via de novo pathway; orotate from (S)-dihydroorotate (NAD(+) route): step 1/1. In terms of biological role, responsible for channeling the electrons from the oxidation of dihydroorotate from the FMN redox center in the PyrD type B subunit to the ultimate electron acceptor NAD(+). The chain is Dihydroorotate dehydrogenase B (NAD(+)), electron transfer subunit from Streptococcus mutans serotype c (strain ATCC 700610 / UA159).